The primary structure comprises 232 residues: Phosphatidylserine decarboxylase proenzyme (232 aa).

Ser-190 acts as the Schiff-base intermediate with substrate; via pyruvic acid in catalysis. At Ser-190 the chain carries Pyruvic acid (Ser); by autocatalysis.

It belongs to the phosphatidylserine decarboxylase family. PSD-A subfamily. In terms of assembly, heterodimer of a large membrane-associated beta subunit and a small pyruvoyl-containing alpha subunit. It depends on pyruvate as a cofactor. Post-translationally, is synthesized initially as an inactive proenzyme. Formation of the active enzyme involves a self-maturation process in which the active site pyruvoyl group is generated from an internal serine residue via an autocatalytic post-translational modification. Two non-identical subunits are generated from the proenzyme in this reaction, and the pyruvate is formed at the N-terminus of the alpha chain, which is derived from the carboxyl end of the proenzyme. The post-translation cleavage follows an unusual pathway, termed non-hydrolytic serinolysis, in which the side chain hydroxyl group of the serine supplies its oxygen atom to form the C-terminus of the beta chain, while the remainder of the serine residue undergoes an oxidative deamination to produce ammonia and the pyruvoyl prosthetic group on the alpha chain.

The protein resides in the cell membrane. The enzyme catalyses a 1,2-diacyl-sn-glycero-3-phospho-L-serine + H(+) = a 1,2-diacyl-sn-glycero-3-phosphoethanolamine + CO2. The protein operates within phospholipid metabolism; phosphatidylethanolamine biosynthesis; phosphatidylethanolamine from CDP-diacylglycerol: step 2/2. In terms of biological role, catalyzes the formation of phosphatidylethanolamine (PtdEtn) from phosphatidylserine (PtdSer). The protein is Phosphatidylserine decarboxylase proenzyme of Beijerinckia indica subsp. indica (strain ATCC 9039 / DSM 1715 / NCIMB 8712).